The chain runs to 194 residues: Holliday junction branch migration complex subunit RuvA (194 aa).

The segment at 1 to 63 is domain I; sequence MFEYMKGMIV…EDEAHLYGFV (63 aa). The tract at residues 64–142 is domain II; sequence DKEELAMFKK…DSQVEYDQNF (79 aa). The flexible linker stretch occupies residues 143-146; it reads FNHE. Positions 146–194 are domain III; the sequence is ENKNNNEVVDALMALGYTKHEGEQAASAVRDTSLSTEEMIRKALNWLAR.

It belongs to the RuvA family. Homotetramer. Forms an RuvA(8)-RuvB(12)-Holliday junction (HJ) complex. HJ DNA is sandwiched between 2 RuvA tetramers; dsDNA enters through RuvA and exits via RuvB. An RuvB hexamer assembles on each DNA strand where it exits the tetramer. Each RuvB hexamer is contacted by two RuvA subunits (via domain III) on 2 adjacent RuvB subunits; this complex drives branch migration. In the full resolvosome a probable DNA-RuvA(4)-RuvB(12)-RuvC(2) complex forms which resolves the HJ.

It localises to the cytoplasm. Functionally, the RuvA-RuvB-RuvC complex processes Holliday junction (HJ) DNA during genetic recombination and DNA repair, while the RuvA-RuvB complex plays an important role in the rescue of blocked DNA replication forks via replication fork reversal (RFR). RuvA specifically binds to HJ cruciform DNA, conferring on it an open structure. The RuvB hexamer acts as an ATP-dependent pump, pulling dsDNA into and through the RuvAB complex. HJ branch migration allows RuvC to scan DNA until it finds its consensus sequence, where it cleaves and resolves the cruciform DNA. This Alkaliphilus metalliredigens (strain QYMF) protein is Holliday junction branch migration complex subunit RuvA.